An 82-amino-acid polypeptide reads, in one-letter code: Small ribosomal subunit protein uS17 (82 aa).

It belongs to the universal ribosomal protein uS17 family. In terms of assembly, part of the 30S ribosomal subunit.

Functionally, one of the primary rRNA binding proteins, it binds specifically to the 5'-end of 16S ribosomal RNA. The protein is Small ribosomal subunit protein uS17 of Shewanella piezotolerans (strain WP3 / JCM 13877).